Reading from the N-terminus, the 505-residue chain is Glutamate--tRNA ligase (505 aa).

The short motif at 12 to 22 (PSPTGDPHVGT) is the 'HIGH' region element. Residues 253–257 (KLSKR) carry the 'KMSKS' region motif. Lys256 lines the ATP pocket.

The protein belongs to the class-I aminoacyl-tRNA synthetase family. Glutamate--tRNA ligase type 1 subfamily. In terms of assembly, monomer.

The protein resides in the cytoplasm. The enzyme catalyses tRNA(Glu) + L-glutamate + ATP = L-glutamyl-tRNA(Glu) + AMP + diphosphate. Catalyzes the attachment of glutamate to tRNA(Glu) in a two-step reaction: glutamate is first activated by ATP to form Glu-AMP and then transferred to the acceptor end of tRNA(Glu). In Chlamydia pneumoniae (Chlamydophila pneumoniae), this protein is Glutamate--tRNA ligase.